Reading from the N-terminus, the 990-residue chain is Glycine dehydrogenase (decarboxylating) (990 aa).

The residue at position 726 (Lys726) is an N6-(pyridoxal phosphate)lysine.

The protein belongs to the GcvP family. As to quaternary structure, the glycine cleavage system is composed of four proteins: P, T, L and H. The cofactor is pyridoxal 5'-phosphate.

It catalyses the reaction N(6)-[(R)-lipoyl]-L-lysyl-[glycine-cleavage complex H protein] + glycine + H(+) = N(6)-[(R)-S(8)-aminomethyldihydrolipoyl]-L-lysyl-[glycine-cleavage complex H protein] + CO2. Its function is as follows. The glycine cleavage system catalyzes the degradation of glycine. The P protein binds the alpha-amino group of glycine through its pyridoxal phosphate cofactor; CO(2) is released and the remaining methylamine moiety is then transferred to the lipoamide cofactor of the H protein. In Rhodopseudomonas palustris (strain ATCC BAA-98 / CGA009), this protein is Glycine dehydrogenase (decarboxylating).